Here is a 180-residue protein sequence, read N- to C-terminus: Segregation and condensation protein B (180 aa).

Belongs to the ScpB family. In terms of assembly, homodimer. Homodimerization may be required to stabilize the binding of ScpA to the Smc head domains. Component of a cohesin-like complex composed of ScpA, ScpB and the Smc homodimer, in which ScpA and ScpB bind to the head domain of Smc. The presence of the three proteins is required for the association of the complex with DNA.

Its subcellular location is the cytoplasm. Its function is as follows. Participates in chromosomal partition during cell division. May act via the formation of a condensin-like complex containing Smc and ScpA that pull DNA away from mid-cell into both cell halves. The protein is Segregation and condensation protein B of Staphylococcus aureus (strain MSSA476).